Reading from the N-terminus, the 364-residue chain is Chorismate synthase (364 aa).

Residues Arg48 and Arg54 each contribute to the NADP(+) site. FMN-binding positions include 125–127, 238–239, Gly278, 293–297, and Arg319; these read RSS, NA, and KPTSS.

The protein belongs to the chorismate synthase family. Homotetramer. Requires FMNH2 as cofactor.

It catalyses the reaction 5-O-(1-carboxyvinyl)-3-phosphoshikimate = chorismate + phosphate. The protein operates within metabolic intermediate biosynthesis; chorismate biosynthesis; chorismate from D-erythrose 4-phosphate and phosphoenolpyruvate: step 7/7. Its function is as follows. Catalyzes the anti-1,4-elimination of the C-3 phosphate and the C-6 proR hydrogen from 5-enolpyruvylshikimate-3-phosphate (EPSP) to yield chorismate, which is the branch point compound that serves as the starting substrate for the three terminal pathways of aromatic amino acid biosynthesis. This reaction introduces a second double bond into the aromatic ring system. The polypeptide is Chorismate synthase (Shewanella woodyi (strain ATCC 51908 / MS32)).